Here is a 623-residue protein sequence, read N- to C-terminus: Mu-like prophage FluMu defective tail fiber protein (623 aa).

It to phage Mu protein S.

This is Mu-like prophage FluMu defective tail fiber protein from Haemophilus influenzae (strain ATCC 51907 / DSM 11121 / KW20 / Rd).